We begin with the raw amino-acid sequence, 244 residues long: tRNA pseudouridine synthase B (244 aa).

D46 acts as the Nucleophile in catalysis.

It belongs to the pseudouridine synthase TruB family. Type 1 subfamily.

The enzyme catalyses uridine(55) in tRNA = pseudouridine(55) in tRNA. Responsible for synthesis of pseudouridine from uracil-55 in the psi GC loop of transfer RNAs. The sequence is that of tRNA pseudouridine synthase B from Bordetella bronchiseptica (strain ATCC BAA-588 / NCTC 13252 / RB50) (Alcaligenes bronchisepticus).